Reading from the N-terminus, the 674-residue chain is L-type lectin-domain containing receptor kinase IV.3 (674 aa).

The N-terminal stretch at 1–22 is a signal peptide; that stretch reads MFFKLFTIFFFFIILLSKPLNS. N-linked (GlcNAc...) asparagine glycans are attached at residues asparagine 21, asparagine 28, asparagine 40, asparagine 81, asparagine 136, and asparagine 188. Residues 23–296 lie on the Extracellular side of the membrane; the sequence is SSQSLNFTYN…TSLQRFYKNR (274 aa). Positions 26-263 are legume-lectin like; sequence SLNFTYNSFH…SEHFVFGWSF (238 aa). The chain crosses the membrane as a helical span at residues 297–317; it reads MPLFSLLLIPVLFVVSLIFLV. Residues 318–674 lie on the Cytoplasmic side of the membrane; that stretch reads RFIVRRRRKF…IAYSIVSGGR (357 aa). The region spanning 355-632 is the Protein kinase domain; the sequence is FKDKDLLGSG…LQYLRGDATL (278 aa). Residues 361–369 and lysine 384 contribute to the ATP site; that span reads LGSGGFGRV. Aspartate 480 functions as the Proton acceptor in the catalytic mechanism.

In the C-terminal section; belongs to the protein kinase superfamily. Ser/Thr protein kinase family. This sequence in the N-terminal section; belongs to the leguminous lectin family.

It is found in the cell membrane. The enzyme catalyses L-seryl-[protein] + ATP = O-phospho-L-seryl-[protein] + ADP + H(+). The catalysed reaction is L-threonyl-[protein] + ATP = O-phospho-L-threonyl-[protein] + ADP + H(+). The protein is L-type lectin-domain containing receptor kinase IV.3 (LECRK43) of Arabidopsis thaliana (Mouse-ear cress).